The following is a 684-amino-acid chain: Sec1 family domain-containing protein 2 (684 aa).

It belongs to the STXBP/unc-18/SEC1 family.

May be involved in protein transport. This chain is Sec1 family domain-containing protein 2 (SCFD2), found in Homo sapiens (Human).